The sequence spans 270 residues: 4-hydroxy-tetrahydrodipicolinate reductase (270 aa).

NAD(+) is bound by residues 8 to 13 (GALGRM), D34, 102 to 104 (GTT), and 128 to 131 (SQNY). H160 acts as the Proton donor/acceptor in catalysis. (S)-2,3,4,5-tetrahydrodipicolinate is bound at residue H161. The active-site Proton donor is the K164. 170–171 (GT) contributes to the (S)-2,3,4,5-tetrahydrodipicolinate binding site.

It belongs to the DapB family.

It is found in the cytoplasm. It catalyses the reaction (S)-2,3,4,5-tetrahydrodipicolinate + NAD(+) + H2O = (2S,4S)-4-hydroxy-2,3,4,5-tetrahydrodipicolinate + NADH + H(+). It carries out the reaction (S)-2,3,4,5-tetrahydrodipicolinate + NADP(+) + H2O = (2S,4S)-4-hydroxy-2,3,4,5-tetrahydrodipicolinate + NADPH + H(+). It participates in amino-acid biosynthesis; L-lysine biosynthesis via DAP pathway; (S)-tetrahydrodipicolinate from L-aspartate: step 4/4. In terms of biological role, catalyzes the conversion of 4-hydroxy-tetrahydrodipicolinate (HTPA) to tetrahydrodipicolinate. In Methanococcus vannielii (strain ATCC 35089 / DSM 1224 / JCM 13029 / OCM 148 / SB), this protein is 4-hydroxy-tetrahydrodipicolinate reductase.